We begin with the raw amino-acid sequence, 121 residues long: Large ribosomal subunit protein bL12 (121 aa).

This sequence belongs to the bacterial ribosomal protein bL12 family. In terms of assembly, homodimer. Part of the ribosomal stalk of the 50S ribosomal subunit. Forms a multimeric L10(L12)X complex, where L10 forms an elongated spine to which 2 to 4 L12 dimers bind in a sequential fashion. Binds GTP-bound translation factors.

Functionally, forms part of the ribosomal stalk which helps the ribosome interact with GTP-bound translation factors. Is thus essential for accurate translation. In Streptococcus pyogenes serotype M3 (strain ATCC BAA-595 / MGAS315), this protein is Large ribosomal subunit protein bL12.